The following is a 254-amino-acid chain: Alcohol dehydrogenase (254 aa).

NAD(+) is bound at residue 10–33; sequence FVAGLGGIGLDTSKGIVKAGPKNL. Ser138 serves as a coordination point for substrate. Tyr151 (proton acceptor) is an active-site residue.

This sequence belongs to the short-chain dehydrogenases/reductases (SDR) family. In terms of assembly, homodimer.

It carries out the reaction a primary alcohol + NAD(+) = an aldehyde + NADH + H(+). The catalysed reaction is a secondary alcohol + NAD(+) = a ketone + NADH + H(+). In Drosophila immigrans (Fruit fly), this protein is Alcohol dehydrogenase (Adh).